Reading from the N-terminus, the 2555-residue chain is Plipastatin synthase subunit C (2555 aa).

The interval 7–306 (IQDIYPLSFM…NTIPIRAQSD (300 aa)) is condensation 1. The adenylation 1 stretch occupies residues 491–894 (TYAELDMYAS…SIEGVREAAV (404 aa)). The Carrier 1 domain maps to 967 to 1042 (APRNVTEMKL…GLATVIREGT (76 aa)). At Ser-1002 the chain carries O-(pantetheine 4'-phosphoryl)serine. The segment at 1054–1344 (KQETYPVSSA…NTLALRTRPE (291 aa)) is condensation 2. Residues 1532 to 1927 (TYEDLNSWAN…QIDGVKEAAV (396 aa)) are adenylation 2. In terms of domain architecture, Carrier 2 spans 2003-2077 (PPRNELEEQL…DLSPFIRKSE (75 aa)). Ser-2038 carries the post-translational modification O-(pantetheine 4'-phosphoryl)serine. The tract at residues 2085–2548 (IQGDVPWTPV…SLTAEDLDSI (464 aa)) is epimerization 3.

Belongs to the ATP-dependent AMP-binding enzyme family. Pantetheine 4'-phosphate serves as cofactor.

In terms of biological role, this protein is a multifunctional enzyme, able to activate and polymerize the amino acids Glu and Ala/Val as part of the biosynthesis of the lipopeptide antibiotic plipastatin. The Ala/Val residue is further epimerized to the D-isomer form. The activation sites for these amino acids consist of individual domains. The sequence is that of Plipastatin synthase subunit C (ppsC) from Bacillus subtilis (strain 168).